Here is a 272-residue protein sequence, read N- to C-terminus: Homeobox protein Hox-D12 (272 aa).

The segment at residues 204–263 is a DNA-binding region (homeobox); the sequence is SRRKRKPYTKQQIAELENEFLANEFINRQKRKELSDRLNLSDQQVKIWFQNRRMKKKRLV.

It belongs to the Abd-B homeobox family.

The protein localises to the nucleus. Functionally, sequence-specific transcription factor which is part of a developmental regulatory system that provides cells with specific positional identities on the anterior-posterior axis. The polypeptide is Homeobox protein Hox-D12 (HOXD12) (Heterodontus francisci (Horn shark)).